Consider the following 169-residue polypeptide: MSTPQDLIDASIPFLNELKNRTAGEDLEKWLNDAYGPGSEFYERVAGLVKDGVRDGWAANIEVDGPRYRRSRLAEPCEELNYFSITAVYMDSVEPYRGQYHQHPYGELNMVVPLNEGAELAGPRGWCGGGWTAPDPASHHYPEVRGGAIIALFYLPAGRISYDITPPAE.

It belongs to the PnbB family.

The catalysed reaction is 4-hydroxylaminobenzoate + H2O + H(+) = 3,4-dihydroxybenzoate + NH4(+). In terms of biological role, lyase involved in the degradation of nitroaromatic compounds. Catalyzes the conversion of 4-hydroxylaminobenzoate to 3,4-dihydroxybenzoate (protocatechuate). The polypeptide is 4-hydroxylaminobenzoate lyase (Nocardioides sp. (strain LMS-CY)).